The chain runs to 330 residues: Putative protein DDB_G0285185 (330 aa).

The tract at residues 212 to 240 (NKLQNQVQSSPKLSSPITKNKEQIVSTTS) is disordered. Residues 214–240 (LQNQVQSSPKLSSPITKNKEQIVSTTS) are compositionally biased toward polar residues.

This Dictyostelium discoideum (Social amoeba) protein is Putative protein DDB_G0285185.